The sequence spans 297 residues: Carbamate kinase (297 aa).

This sequence belongs to the carbamate kinase family.

It localises to the cytoplasm. It carries out the reaction hydrogencarbonate + NH4(+) + ATP = carbamoyl phosphate + ADP + H2O + H(+). The catalysed reaction is carbamate + ATP = carbamoyl phosphate + ADP. It catalyses the reaction hydrogencarbonate + NH4(+) = carbamate + H2O + H(+). It participates in nitrogen metabolism; (S)-allantoin degradation. Kinase involved in the anaerobic nitrogen utilization via the assimilation of allantoin. Catalyzes the transfer of a phosphate group from carbamoyl phosphate to ADP to produce ATP and leave carbamate, which spontaneously hydrolyzes to ammonia and hydrogencarbonate. The chain is Carbamate kinase from Escherichia coli O6:H1 (strain CFT073 / ATCC 700928 / UPEC).